Reading from the N-terminus, the 364-residue chain is Dihydroorotate dehydrogenase (quinone) (364 aa).

FMN is bound by residues A61–K65 and T85. K65 is a binding site for substrate. N110 to F114 is a substrate binding site. FMN-binding residues include N139 and N170. N170 contributes to the substrate binding site. S173 (nucleophile) is an active-site residue. N175 contacts substrate. K214 and A242 together coordinate FMN. N243–T244 is a binding site for substrate. Residues G266, G295, and Y316–S317 each bind FMN.

The protein belongs to the dihydroorotate dehydrogenase family. Type 2 subfamily. In terms of assembly, monomer. The cofactor is FMN.

It is found in the cell membrane. The enzyme catalyses (S)-dihydroorotate + a quinone = orotate + a quinol. It participates in pyrimidine metabolism; UMP biosynthesis via de novo pathway; orotate from (S)-dihydroorotate (quinone route): step 1/1. Catalyzes the conversion of dihydroorotate to orotate with quinone as electron acceptor. This Rhodopseudomonas palustris (strain BisB5) protein is Dihydroorotate dehydrogenase (quinone).